The sequence spans 494 residues: Sugar phosphate exchanger 3 (494 aa).

The chain crosses the membrane as a helical span at residues 10-30 (GALLTSFSHHHLAVFLLTFFS). Asn58 carries N-linked (GlcNAc...) asparagine glycosylation. 5 helical membrane-spanning segments follow: residues 81 to 101 (TLFL…GLFI), 113 to 133 (WVLS…GTLT), 146 to 166 (GLWI…VAVM), 177 to 197 (VVFG…AFLA), and 209 to 229 (FLVT…GLLV). The disordered stretch occupies residues 240–261 (GAEESSEEDSQRPLIDGAENED). Helical transmembrane passes span 297-317 (LAYA…PFYL), 333-353 (IWYD…SDVL), 357-377 (APVL…YSRS), 386-406 (LLMT…SSAI), 428-448 (GIVD…VSLI), and 457-477 (VFYF…PLIV).

Belongs to the major facilitator superfamily. Organophosphate:Pi antiporter (OPA) (TC 2.A.1.4) family. Interacts with ATRAID; the interaction is direct and both proteins are mutually dependent for their stability. Glycosylated.

The protein localises to the endoplasmic reticulum membrane. Its subcellular location is the lysosome membrane. Functionally, unlike the other SLC37 members, lacks glucose-6-phosphate antiporter activity. In osteoclasts, forms a transporter complex with ATRAID for nitrogen-containing-bisphophonates (N-BPs) required for releasing N-BP molecules that have trafficked to lysosomes through fluid-phase endocytosis into the cytosol. The polypeptide is Sugar phosphate exchanger 3 (Slc37a3) (Mus musculus (Mouse)).